The primary structure comprises 154 residues: Transcriptional repressor NrdR (154 aa).

A zinc finger spans residues cysteine 3–cysteine 34. Residues valine 48–glutamate 138 enclose the ATP-cone domain.

This sequence belongs to the NrdR family. The cofactor is Zn(2+).

Functionally, negatively regulates transcription of bacterial ribonucleotide reductase nrd genes and operons by binding to NrdR-boxes. This is Transcriptional repressor NrdR from Chlamydia trachomatis serovar L2 (strain ATCC VR-902B / DSM 19102 / 434/Bu).